Here is a 353-residue protein sequence, read N- to C-terminus: Serine proteinase inhibitor 1 (353 aa).

It belongs to the serpin family. Poxviruses subfamily.

Its subcellular location is the host cytoplasm. Functionally, plays a role in mediating viral host range. May act to inhibit a caspase independent form of apoptosis to allow efficient virus replication in infected cells. The protein is Serine proteinase inhibitor 1 (OPG208) of Vaccinia virus (strain Copenhagen) (VACV).